Here is a 101-residue protein sequence, read N- to C-terminus: UPF0473 protein str1961 (101 aa).

This sequence belongs to the UPF0473 family.

In Streptococcus thermophilus (strain CNRZ 1066), this protein is UPF0473 protein str1961.